The following is a 147-amino-acid chain: Urease accessory protein UreE (147 aa).

Belongs to the UreE family.

It is found in the cytoplasm. Involved in urease metallocenter assembly. Binds nickel. Probably functions as a nickel donor during metallocenter assembly. This chain is Urease accessory protein UreE, found in Nostoc sp. (strain PCC 7120 / SAG 25.82 / UTEX 2576).